Consider the following 228-residue polypeptide: Ribose-5-phosphate isomerase A (228 aa).

Substrate-binding positions include 27-30 (TGTT), 86-89 (DGAD), and 100-103 (KGMG). Catalysis depends on Glu109, which acts as the Proton acceptor. A substrate-binding site is contributed by Lys127.

It belongs to the ribose 5-phosphate isomerase family. Homodimer.

The catalysed reaction is aldehydo-D-ribose 5-phosphate = D-ribulose 5-phosphate. It functions in the pathway carbohydrate degradation; pentose phosphate pathway; D-ribose 5-phosphate from D-ribulose 5-phosphate (non-oxidative stage): step 1/1. Its function is as follows. Catalyzes the reversible conversion of ribose-5-phosphate to ribulose 5-phosphate. The chain is Ribose-5-phosphate isomerase A from Borreliella afzelii (strain PKo) (Borrelia afzelii).